The chain runs to 175 residues: MAPLGPTGPLPQSFLLKCLEQMRKVQADGTALQETLCATHQLCHPEELVLLGHALGIPQPPLSSCSSQALQLMGCLRQLHSGLFLYQGLLQALAGISPELAPTLDTLQLDTTDFAINIWQQMEDLGMAPAVPPTQGTMPAFTSAFQRRAGGVLVASNLQSFLELAYRALRHFAKP.

2 disulfides stabilise this stretch: Cys-37-Cys-43 and Cys-65-Cys-75. O-linked (GalNAc...) threonine glycosylation is present at Thr-134.

This sequence belongs to the IL-6 superfamily. Monomer. In terms of processing, O-glycosylated.

Its subcellular location is the secreted. Its function is as follows. Granulocyte/macrophage colony-stimulating factors are cytokines that act in hematopoiesis by controlling the production, differentiation, and function of 2 related white cell populations of the blood, the granulocytes and the monocytes-macrophages. This CSF induces granulocytes. The chain is Granulocyte colony-stimulating factor (CSF3) from Canis lupus familiaris (Dog).